The following is a 493-amino-acid chain: MPLYSVTVKWGKEKFEGVELNTDEPPMVFKAQLFALTGVQPARQKVMVKGGTLKDDDWGNIKIKNGMTLLMMGSADALPEEPSAKTVFVEDMTEEQLASAMELPCGLTNLGNTCYMNATVQCIRSVPELKDALKRYAGALRASGEMASAQYITAALRDLFDSMDKTSSSIPPIILLQFLHMAFPQFAEKGEQGQYLQQDANECWIQMMRVLQQKLEAIEDDSVKETDSSSASAATPSKKKSLIDQFFGVEFETTMKCTESEEEEVTKGKENQLQLSCFINQEVKYLFTGLKLRLQEEITKQSPTLQRNALYIKSSKISRLPAYLTIQMVRFFYKEKESVNAKVLKDVKFPLMLDMYELCTPELQEKMVSFRSKFKDLEDKKVNQQPNTSDKKSSPQKEVKYEPFSFADDIGSNNCGYYDLQAVLTHQGRSSSSGHYVSWVKRKQDEWIKFDDDKVSIVTPEDILRLSGGGDWHIAYVLLYGPRRVEIMEEESE.

Positions 4–80 (YSVTVKWGKE…MMGSADALPE (77 aa)) constitute a Ubiquitin-like domain. The residue at position 52 (threonine 52) is a Phosphothreonine. The 379-residue stretch at 105–483 (CGLTNLGNTC…IAYVLLYGPR (379 aa)) folds into the USP domain. Cysteine 114 serves as the catalytic Nucleophile. A phosphoserine mark is found at serine 143 and serine 148. Threonine 235 is modified (phosphothreonine). Residues serine 237, serine 302, and serine 432 each carry the phosphoserine modification. The active-site Proton acceptor is histidine 435. Lysine 449 is subject to N6-acetyllysine.

Belongs to the peptidase C19 family. USP14/UBP6 subfamily. Homodimer (Potential). Associates with the 26S proteasome. Interacts with FANCC, CXCR4 and ERN1. Interacts with TRIM14; this interaction recruits USP14 to cleave ubiquitin chains of CGAS and KDM4D.

It localises to the cytoplasm. The protein resides in the cell membrane. It catalyses the reaction Thiol-dependent hydrolysis of ester, thioester, amide, peptide and isopeptide bonds formed by the C-terminal Gly of ubiquitin (a 76-residue protein attached to proteins as an intracellular targeting signal).. Proteasome-associated deubiquitinase which releases ubiquitin from the proteasome targeted ubiquitinated proteins. Ensures the regeneration of ubiquitin at the proteasome. Is a reversibly associated subunit of the proteasome and a large fraction of proteasome-free protein exists within the cell. Required for the degradation of the chemokine receptor CXCR4 which is critical for CXCL12-induced cell chemotaxis. Also serves as a physiological inhibitor of endoplasmic reticulum-associated degradation (ERAD) under the non-stressed condition by inhibiting the degradation of unfolded endoplasmic reticulum proteins via interaction with ERN1. Indispensable for synaptic development and function at neuromuscular junctions (NMJs). Plays a role in the innate immune defense against viruses by stabilizing the viral DNA sensor CGAS and thus inhibiting its autophagic degradation. Inhibits OPTN-mediated selective autophagic degradation of KDM4D and thereby negatively regulates H3K9me2 and H3K9me3. This is Ubiquitin carboxyl-terminal hydrolase 14 (USP14) from Pan troglodytes (Chimpanzee).